A 330-amino-acid polypeptide reads, in one-letter code: ADP-L-glycero-D-manno-heptose-6-epimerase (330 aa).

NADP(+)-binding positions include 11–12 (FI), 32–33 (DN), lysine 39, lysine 54, 75–79 (EGACS), and asparagine 92. Residue tyrosine 139 is the Proton acceptor of the active site. Lysine 143 contributes to the NADP(+) binding site. Substrate is bound at residue asparagine 168. NADP(+) contacts are provided by valine 169 and lysine 177. The active-site Proton acceptor is lysine 177. Residues arginine 179, histidine 186, 200–203 (FGEY), arginine 213, and tyrosine 292 contribute to the substrate site.

This sequence belongs to the NAD(P)-dependent epimerase/dehydratase family. HldD subfamily. Homopentamer. It depends on NADP(+) as a cofactor.

It catalyses the reaction ADP-D-glycero-beta-D-manno-heptose = ADP-L-glycero-beta-D-manno-heptose. It functions in the pathway nucleotide-sugar biosynthesis; ADP-L-glycero-beta-D-manno-heptose biosynthesis; ADP-L-glycero-beta-D-manno-heptose from D-glycero-beta-D-manno-heptose 7-phosphate: step 4/4. Its function is as follows. Catalyzes the interconversion between ADP-D-glycero-beta-D-manno-heptose and ADP-L-glycero-beta-D-manno-heptose via an epimerization at carbon 6 of the heptose. This is ADP-L-glycero-D-manno-heptose-6-epimerase from Burkholderia multivorans (strain ATCC 17616 / 249).